The chain runs to 840 residues: MTEEKKFSSSNRPARKQAVPERKELPASQRRHAAKLTDGTNSSAGTTPRSNKPARQGQSQGQGQNRHTNSSRSNTQGGNASRPNQSKSQGQGGRNNQRPGSRTQASEGRPMIREKKNWSTKPREGQIDYSKKTDNSLKQYVSENEKRKQAAAAKTTKKPAEQSKKAAEKPAQTKPKTAETKTTATTTQSGTGKFGGALASGNNSARNNSRKRNTNGTGQQTPRRNDKPRGSKKSRRIAAKKGPAVPATERKEQPLPAVLEYRIGMNVQDLSKLLHRDTAEIIKKLFLLGIVTNQNQSLDADTIEILAADYGIESQLKEEEDVADIDKFFEDDTIDESKLVARPPVVTIMGHVDHGKTTLLDYLRNSNVTEGEAGGITQHIGAYQTQLNGKTITFLDTPGHAAFTEMRARGANVTDLTILVVAADDGVMPQTIEAINHAKAAETPIIVAVNKIDKPGANPDEVMNQLMAYDLVPEEYGGDTIFVKISAKFGQNVDELLEMILLQAEVLELKANPDVPARGSVIEARLDKGRGPVATVLVQQGTMRVGDPIVVGNTYGRVRTMTNERGIELAEALPATPVQITGINEVPQAGDRFIVMADEKTARAAGEERAKRAQEAIRNSGSVVTLDTLFSTMSEKAMKTVPVIVKADVQGSVEALSGSLKKIEVDGVRVDIIHTAVGAINESDVTLASASGAIIIGFNVRSTPLAKSQADSDKVDIRFYNVIYNAIDDVEAAMKGQLEPVFEEKVIGNVTVKELFKFSKVGIIAGAMVEEGKITKDSKVRIMRDNVVVYDGEVASLQRGKDSVNEVKMGYEFGFTVAKYNDIRVGDTVEAYIMEEVKVK.

The interval 1–251 (MTEEKKFSSS…GPAVPATERK (251 aa)) is disordered. Polar residues-rich tracts occupy residues 38–50 (DGTNSSAGTTPRS) and 65–83 (NRHTNSSRSNTQGGNASRP). Positions 84–102 (NQSKSQGQGGRNNQRPGSR) are enriched in low complexity. Composition is skewed to basic and acidic residues over residues 110–135 (PMIREKKNWSTKPREGQIDYSKKTDN) and 158–168 (KPAEQSKKAAE). Residues 169 to 207 (KPAQTKPKTAETKTTATTTQSGTGKFGGALASGNNSARN) show a composition bias toward low complexity. Residues 230 to 239 (GSKKSRRIAA) are compositionally biased toward basic residues. The 170-residue stretch at 341–510 (ARPPVVTIMG…LLQAEVLELK (170 aa)) folds into the tr-type G domain. Positions 350 to 357 (GHVDHGKT) are G1. 350-357 (GHVDHGKT) contacts GTP. The segment at 375–379 (GITQH) is G2. A G3 region spans residues 396-399 (DTPG). GTP contacts are provided by residues 396–400 (DTPGH) and 450–453 (NKID). Residues 450 to 453 (NKID) are G4. The interval 486–488 (SAK) is G5.

Belongs to the TRAFAC class translation factor GTPase superfamily. Classic translation factor GTPase family. IF-2 subfamily.

The protein localises to the cytoplasm. Functionally, one of the essential components for the initiation of protein synthesis. Protects formylmethionyl-tRNA from spontaneous hydrolysis and promotes its binding to the 30S ribosomal subunits. Also involved in the hydrolysis of GTP during the formation of the 70S ribosomal complex. In Leuconostoc citreum (strain KM20), this protein is Translation initiation factor IF-2.